Here is a 204-residue protein sequence, read N- to C-terminus: uncharacterized protein (204 aa).

This is an uncharacterized protein from Methanocaldococcus jannaschii (strain ATCC 43067 / DSM 2661 / JAL-1 / JCM 10045 / NBRC 100440) (Methanococcus jannaschii).